A 177-amino-acid chain; its full sequence is Large ribosomal subunit protein uL10 (177 aa).

Belongs to the universal ribosomal protein uL10 family. Part of the ribosomal stalk of the 50S ribosomal subunit. The N-terminus interacts with L11 and the large rRNA to form the base of the stalk. The C-terminus forms an elongated spine to which L12 dimers bind in a sequential fashion forming a multimeric L10(L12)X complex.

Forms part of the ribosomal stalk, playing a central role in the interaction of the ribosome with GTP-bound translation factors. This is Large ribosomal subunit protein uL10 from Leptospira interrogans serogroup Icterohaemorrhagiae serovar copenhageni (strain Fiocruz L1-130).